We begin with the raw amino-acid sequence, 216 residues long: Fucoxanthin-chlorophyll a-c binding protein C, chloroplastic (216 aa).

Residues 1 to 38 (MKSAIMAVASAAPGLRGPSAFNGAALTTSAKSSSAMKM) constitute a chloroplast transit peptide. Helical transmembrane passes span 80–100 (IAML…PGML), 121–141 (IPPG…LAVM), and 182–202 (GRAA…NNKP).

The protein belongs to the fucoxanthin chlorophyll protein family. The LHC complex of chromophytic algae is composed of fucoxanthin, chlorophyll A and C bound non-covalently by fucoxanthin chlorophyll proteins (FCPs). The ratio of pigments in this LHC is; fucoxanthin: chlorophyll C: chlorophyll A; (0.6-1): (0.1-0.3): (1).

The protein localises to the plastid. It is found in the chloroplast thylakoid membrane. In terms of biological role, the light-harvesting complex (LHC) functions as a light receptor, it captures and delivers excitation energy to photosystems with which it is closely associated. Energy is transferred from the carotenoid and chlorophyll C (or B) to chlorophyll A and the photosynthetic reaction centers where it is used to synthesize ATP and reducing power. In Macrocystis pyrifera (Giant kelp), this protein is Fucoxanthin-chlorophyll a-c binding protein C, chloroplastic (FCPC).